The chain runs to 781 residues: MERVEGWLIDADYETIGGKAVVRLWCKDDQGIFVAYDYNFDPYFYVIGVDEDILKNAATSTRREVIKLKSFEKAQLKTLGREVEGYIVYAHHPQHVPKLRDYLSQFGDVREADIPFAYRYLIDKDLACMDGIAIEGEKQGGVIRSYKIEKVERIPRMEFPELKMLVFDCEMLSSFGMPEPEKDPIIVISVKTNDDDEIILTGDERKIISDFVKLIKSYDPDIIVGYNQDAFDWPYLRKRAERWNIPLDVGRDGSNVVFRGGRPKITGRLNVDLYDIAMRISDIKIKKLENVAEFLGTKIEIADIEAKDIYRYWSRGEKEKVLNYARQDAINTYLIAKELLPMHYELSKMIRLPVDDVTRMGRGKQVDWLLLSEAKKIGEIAPNPPEHAESYEGAFVLEPERGLHENVACLDFASMYPSIMIAFNISPDTYGCRDDCYEAPEVGHKFRKSPDGFFKRILRMLIEKRRELKVELKNLSPESSEYKLLDIKQQTLKVLTNSFYGYMGWNLARWYCHPCAEATTAWGRHFIRTSAKIAESMGFKVLYGDTDSIFVTKAGMTKEDVDRLIDKLHEELPIQIEVDEYYSAIFFVEKKRYAGLTEDGRLVVKGLEVRRGDWCELAKKVQREVIEVILKEKNPEKALSLVKDVILRIKEGKVSLEEVVIYKGLTKKPSKYESMQAHVKAALKAREMGIIYPVSSKIGYVIVKGSGNIGDRAYPIDLIEDFDGENLRIKTKSGIEIKKLDKDYYIDNQIIPSVLRILERFGYTEASLKGSSQMSLDSFFS.

Belongs to the DNA polymerase type-B family.

The catalysed reaction is DNA(n) + a 2'-deoxyribonucleoside 5'-triphosphate = DNA(n+1) + diphosphate. The protein is DNA polymerase (pol) of Archaeoglobus fulgidus (strain ATCC 49558 / DSM 4304 / JCM 9628 / NBRC 100126 / VC-16).